Consider the following 475-residue polypeptide: MEIOTIC F-BOX protein MOF (475 aa).

The tract at residues 1–58 is disordered; that stretch reads MRRERDATQIPENPMEGIPQTAAAAAAAAAAEASEPPRKRARVDGGGGGAGEEEEDRL. Residues 22-33 are compositionally biased toward low complexity; sequence AAAAAAAAAAEA. One can recognise an F-box domain in the interval 55 to 91; sequence EDRLSDLPDCLLEDILAHLGSRQAVQTSVLSRRWRNL.

This sequence belongs to the F-box protein family. FBX subfamily. As to quaternary structure, part of a SCF (SKP1-CUL1-F-box protein) E3 ubiquitin-protein ligase complex. Interacts (via F-box domain) directly with SKP1. In terms of tissue distribution, highly expressed in the stem, leaf and in the anther during meiosis. Weakly expressed in roots and lemma/palea.

It is found in the nucleus. Its subcellular location is the chromosome. It participates in protein modification; protein ubiquitination. Functionally, probable component of a SCF (SKP1-CULLIN-F-box protein) E3 ubiquitin-protein ligase complex and may function through the ubiquitin-mediated protein degradation or signaling pathway. Required for male meiotic prophase I progression. Required for telomere bouquet formation, homologous chromosome pairing and for the formation of the synaptonemal complex (SC), which stabilizes initial chromosomal axial associations and promotes crossover formation. Involved in meiotic DNA double-strand break (DSB) end-processing and repair, and is important in the recruitment of DSB repair proteins to the DSB sites. The sequence is that of MEIOTIC F-BOX protein MOF from Oryza sativa subsp. japonica (Rice).